The sequence spans 962 residues: IQ motif and SEC7 domain-containing protein 1 (962 aa).

The disordered stretch occupies residues 1–96 (MACRRRYLSS…STSVLRKQAE (96 aa)). Low complexity predominate over residues 8 to 19 (LSSLETGSSLST). Residues 30–39 (SSETGTSLDS) show a composition bias toward polar residues. Serine 89, serine 105, and serine 107 each carry phosphoserine. The IQ domain occupies 134 to 163 (TRHAARTIQTAFRQYQMNKNFERLRSSMSE). 3 positions are modified to phosphoserine: serine 180, serine 248, and serine 252. Disordered regions lie at residues 264–292 (SEEV…HRKL), 311–333 (LSPP…DLRL), and 348–516 (KEDK…DSPA). Basic and acidic residues predominate over residues 273–292 (ARARDTEPKPGLHGMDHRKL). 2 stretches are compositionally biased toward basic and acidic residues: residues 365–375 (ERPEPRLRVEH) and 429–445 (LPRE…RPLE). The segment covering 470 to 488 (DSINSTSNSNDTINCSSES) has biased composition (low complexity). Serine 511 and serine 514 each carry phosphoserine. Positions 516 to 709 (AFSNDVIRKR…IGIYERIRKR (194 aa)) constitute an SEC7 domain. Residues 773 to 865 (HQREIFLFND…LRESVAEVQE (93 aa)) form the PH domain. At serine 891 the chain carries Phosphoserine. At tyrosine 910 the chain carries Phosphotyrosine. The segment at 921 to 962 (LSSSLRDLSEAGKRGRRSSAGSLESNVEFQPFQPSQPPVLCS) is disordered. A phosphoserine mark is found at serine 923 and serine 924. Residues 939-948 (SAGSLESNVE) are compositionally biased toward polar residues.

Belongs to the BRAG family. As to quaternary structure, interacts with ARF1 and ARF6. Interacts with GRIA2; the interaction is required for ARF6 activation.

The protein localises to the cytoplasm. It is found in the nucleus. The protein resides in the postsynaptic density. It localises to the cytoplasmic vesicle. Its subcellular location is the secretory vesicle. The protein localises to the synaptic vesicle. Functionally, guanine nucleotide exchange factor for ARF1 and ARF6. Guanine nucleotide exchange factor activity is enhanced by lipid binding. Accelerates GTP binding by ARFs of all three classes. Guanine nucleotide exchange protein for ARF6, mediating internalization of beta-1 integrin. Involved in neuronal development. In neurons, plays a role in the control of vesicle formation by endocytoc cargo. Upon long term depression, interacts with GRIA2 and mediates the activation of ARF6 to internalize synaptic AMPAR receptors. The polypeptide is IQ motif and SEC7 domain-containing protein 1 (Rattus norvegicus (Rat)).